Reading from the N-terminus, the 327-residue chain is DNA-directed RNA polymerase subunit alpha (327 aa).

Residues 1-233 (MVREKVKVST…NLFIPFLHVE (233 aa)) form an alpha N-terminal domain (alpha-NTD) region. An alpha C-terminal domain (alpha-CTD) region spans residues 264 to 327 (TKELAFQYIF…KKILDILEKK (64 aa)).

Belongs to the RNA polymerase alpha chain family. In terms of assembly, in plastids the minimal PEP RNA polymerase catalytic core is composed of four subunits: alpha, beta, beta', and beta''. When a (nuclear-encoded) sigma factor is associated with the core the holoenzyme is formed, which can initiate transcription.

Its subcellular location is the plastid. The protein localises to the chloroplast. It catalyses the reaction RNA(n) + a ribonucleoside 5'-triphosphate = RNA(n+1) + diphosphate. In terms of biological role, DNA-dependent RNA polymerase catalyzes the transcription of DNA into RNA using the four ribonucleoside triphosphates as substrates. The protein is DNA-directed RNA polymerase subunit alpha of Capsella bursa-pastoris (Shepherd's purse).